The chain runs to 145 residues: uncharacterized protein (145 aa).

This is an uncharacterized protein from Sinorhizobium fredii (strain NBRC 101917 / NGR234).